We begin with the raw amino-acid sequence, 223 residues long: Twisted gastrulation protein homolog 1 (223 aa).

Residues Met1–Ser25 form the signal peptide. N-linked (GlcNAc...) asparagine glycans are attached at residues Asn52 and Asn81.

It belongs to the twisted gastrulation protein family. As to quaternary structure, interacts with CHRD and BMP4. This interaction enhances CHRD/BMP4 complex formation. Interacts with BMP7.

Its subcellular location is the secreted. Its function is as follows. May be involved in dorsoventral axis formation. Seems to antagonize BMP signaling by forming ternary complexes with CHRD and BMPs, thereby preventing BMPs from binding to their receptors. In addition to the anti-BMP function, also has pro-BMP activity, partly mediated by cleavage and degradation of CHRD, which releases BMPs from ternary complexes. May be an important modulator of BMP-regulated cartilage development and chondrocyte differentiation. May play a role in thymocyte development. This Homo sapiens (Human) protein is Twisted gastrulation protein homolog 1 (TWSG1).